Here is a 116-residue protein sequence, read N- to C-terminus: MTNHRIDRVGMEIKREVNEILHKKVRDPRVQGVTITEVQMLGDLSVAKVYYTIMSDLASDNQKAEIGLKKATGTIKRELGKQLTMYKIPDLVFEKDNSIAYGNKIDQLLRELEKKQ.

The protein belongs to the RbfA family. Monomer. Binds 30S ribosomal subunits, but not 50S ribosomal subunits or 70S ribosomes.

The protein localises to the cytoplasm. In terms of biological role, one of several proteins that assist in the late maturation steps of the functional core of the 30S ribosomal subunit. Associates with free 30S ribosomal subunits (but not with 30S subunits that are part of 70S ribosomes or polysomes). Required for efficient processing of 16S rRNA. May interact with the 5'-terminal helix region of 16S rRNA. This chain is Ribosome-binding factor A, found in Streptococcus equi subsp. zooepidemicus (strain H70).